The primary structure comprises 308 residues: Glucan 1,3-beta-glucosidase ARB_02797 (308 aa).

The N-terminal stretch at 1-20 (MRFSTALSLALAVSPAAVFA) is a signal peptide. The Proton donor role is filled by Glu-120. Asn-126 is a glycosylation site (N-linked (GlcNAc...) asparagine). The Nucleophile role is filled by Glu-220.

It belongs to the glycosyl hydrolase 17 family.

It is found in the secreted. The protein resides in the cell wall. Its subcellular location is the cytoplasm. The enzyme catalyses Successive hydrolysis of beta-D-glucose units from the non-reducing ends of (1-&gt;3)-beta-D-glucans, releasing alpha-glucose.. Functionally, cell wall glucan 1,3-beta-glucosidase involved in cell wall biosynthesis and virulence. Crucial for delivery of beta-1,3-glucan to the biofilm matrix and for accumulation of mature matrix biomass. This chain is Glucan 1,3-beta-glucosidase ARB_02797, found in Arthroderma benhamiae (strain ATCC MYA-4681 / CBS 112371) (Trichophyton mentagrophytes).